Consider the following 397-residue polypeptide: CCA-adding enzyme (397 aa).

Residues glycine 26 and arginine 29 each contribute to the ATP site. Positions 26 and 29 each coordinate CTP. Positions 39 and 41 each coordinate Mg(2+). Residues arginine 110, aspartate 153, arginine 156, arginine 159, and arginine 162 each contribute to the ATP site. CTP-binding residues include arginine 110, aspartate 153, arginine 156, arginine 159, and arginine 162.

Belongs to the tRNA nucleotidyltransferase/poly(A) polymerase family. Bacterial CCA-adding enzyme type 3 subfamily. In terms of assembly, homodimer. Mg(2+) serves as cofactor.

The enzyme catalyses a tRNA precursor + 2 CTP + ATP = a tRNA with a 3' CCA end + 3 diphosphate. It catalyses the reaction a tRNA with a 3' CCA end + 2 CTP + ATP = a tRNA with a 3' CCACCA end + 3 diphosphate. Its function is as follows. Catalyzes the addition and repair of the essential 3'-terminal CCA sequence in tRNAs without using a nucleic acid template. Adds these three nucleotides in the order of C, C, and A to the tRNA nucleotide-73, using CTP and ATP as substrates and producing inorganic pyrophosphate. tRNA 3'-terminal CCA addition is required both for tRNA processing and repair. Also involved in tRNA surveillance by mediating tandem CCA addition to generate a CCACCA at the 3' terminus of unstable tRNAs. While stable tRNAs receive only 3'-terminal CCA, unstable tRNAs are marked with CCACCA and rapidly degraded. In Bacillus mycoides (strain KBAB4) (Bacillus weihenstephanensis), this protein is CCA-adding enzyme.